The following is a 317-amino-acid chain: Homoserine O-succinyltransferase (317 aa).

Cys142 (acyl-thioester intermediate) is an active-site residue. Residues Lys163 and Ser192 each contribute to the substrate site. His235 acts as the Proton acceptor in catalysis. Glu237 is a catalytic residue. Arg249 is a binding site for substrate.

Belongs to the MetA family.

It localises to the cytoplasm. It catalyses the reaction L-homoserine + succinyl-CoA = O-succinyl-L-homoserine + CoA. It participates in amino-acid biosynthesis; L-methionine biosynthesis via de novo pathway; O-succinyl-L-homoserine from L-homoserine: step 1/1. In terms of biological role, transfers a succinyl group from succinyl-CoA to L-homoserine, forming succinyl-L-homoserine. In Aeromonas hydrophila subsp. hydrophila (strain ATCC 7966 / DSM 30187 / BCRC 13018 / CCUG 14551 / JCM 1027 / KCTC 2358 / NCIMB 9240 / NCTC 8049), this protein is Homoserine O-succinyltransferase.